The chain runs to 173 residues: MAIILGIDPGSRVTGYGVIRQVGRQLSYLGSGCIRTKVDDLPSRLKLIYAGVTEIITQFQPDYFAIEQVFMAKNADSALKLGQARGVAIVAATNQSLPVFEYAARQVKQTVVGIGSAEKSQVQHMVRTLLKLPANPQADAADALAIAITHCHISQNVAQVSETRLNLARGRLR.

Residues aspartate 8, glutamate 67, and aspartate 139 contribute to the active site. Positions 8, 67, and 139 each coordinate Mg(2+).

Belongs to the RuvC family. Homodimer which binds Holliday junction (HJ) DNA. The HJ becomes 2-fold symmetrical on binding to RuvC with unstacked arms; it has a different conformation from HJ DNA in complex with RuvA. In the full resolvosome a probable DNA-RuvA(4)-RuvB(12)-RuvC(2) complex forms which resolves the HJ. The cofactor is Mg(2+).

Its subcellular location is the cytoplasm. The enzyme catalyses Endonucleolytic cleavage at a junction such as a reciprocal single-stranded crossover between two homologous DNA duplexes (Holliday junction).. In terms of biological role, the RuvA-RuvB-RuvC complex processes Holliday junction (HJ) DNA during genetic recombination and DNA repair. Endonuclease that resolves HJ intermediates. Cleaves cruciform DNA by making single-stranded nicks across the HJ at symmetrical positions within the homologous arms, yielding a 5'-phosphate and a 3'-hydroxyl group; requires a central core of homology in the junction. The consensus cleavage sequence is 5'-(A/T)TT(C/G)-3'. Cleavage occurs on the 3'-side of the TT dinucleotide at the point of strand exchange. HJ branch migration catalyzed by RuvA-RuvB allows RuvC to scan DNA until it finds its consensus sequence, where it cleaves and resolves the cruciform DNA. This chain is Crossover junction endodeoxyribonuclease RuvC, found in Klebsiella pneumoniae (strain 342).